Reading from the N-terminus, the 37-residue chain is Cytochrome b6-f complex subunit 5 (37 aa).

A helical transmembrane segment spans residues 5 to 25 (FLFGIVLGLIPITLAGLFVTA).

This sequence belongs to the PetG family. The 4 large subunits of the cytochrome b6-f complex are cytochrome b6, subunit IV (17 kDa polypeptide, PetD), cytochrome f and the Rieske protein, while the 4 small subunits are PetG, PetL, PetM and PetN. The complex functions as a dimer.

The protein resides in the plastid thylakoid membrane. Functionally, component of the cytochrome b6-f complex, which mediates electron transfer between photosystem II (PSII) and photosystem I (PSI), cyclic electron flow around PSI, and state transitions. PetG is required for either the stability or assembly of the cytochrome b6-f complex. In Cuscuta reflexa (Southern Asian dodder), this protein is Cytochrome b6-f complex subunit 5.